We begin with the raw amino-acid sequence, 614 residues long: Vitamin B12 transporter BtuB (614 aa).

The signal sequence occupies residues 1-20 (MIKKASLLTACSVTAFSAWA). The TonB box motif lies at 26 to 33 (DTLVVTAN). The TBDR plug domain occupies 38–152 (PRSTVLAPTT…IGGVVNIITT (115 aa)). Cyanocob(III)alamin is bound by residues Leu-83, Ser-85, Asn-92, and 110 to 111 (VS). One can recognise a TBDR beta-barrel domain in the interval 155-614 (HPGTEISAGW…EYTLSGSYTF (460 aa)). 3 beta stranded membrane passes run 158 to 165 (TEISAGWG), 169 to 178 (YQNYDVSTQQ), and 184 to 195 (TRVTLLGDYAHT). Ca(2+)-binding residues include Asp-199, Gln-211, Asp-213, and Asp-215. Transmembrane regions (beta stranded) follow at residues 217–227 (FLSKTLYGALE) and 232–248 (DVWS…NRTN). 2 residues coordinate Ca(2+): Tyr-249 and Asp-250. Residue Ala-251 participates in cyanocob(III)alamin binding. Asp-261 serves as a coordination point for Ca(2+). 14 beta stranded membrane passes run 263-277 (RKLY…LRYN), 279-296 (ELIK…KDYN), 309-325 (TLDE…NNII), 328-337 (HGNIGAGVDW), 353-369 (YDQR…QQVG), 371-381 (FTFEGAGRSDD), 385-400 (FGRH…WEFI), 403-417 (YRFI…KAPN), 434-443 (KSKQWEGAFE), 449-458 (VNWRISGYRN), 473-490 (YYNE…TANF), 494-509 (PLTH…ARNA), 517-529 (RRAK…QLDW), and 535-550 (DWGI…YDKD). Residue Thr-309 participates in cyanocob(III)alamin binding. Arg-517 is a cyanocob(III)alamin binding site. Position 551 (Tyr-551) interacts with cyanocob(III)alamin. 3 consecutive transmembrane segments (beta stranded) span residues 558 to 572 (TVKM…LAVA), 585 to 596 (IANLFDKDYETV), and 602 to 614 (AGRE…SYTF). The TonB C-terminal box motif lies at 597-614 (YGYQTAGREYTLSGSYTF).

The protein belongs to the TonB-dependent receptor family. BtuB (TC 1.B.14.3.1) subfamily.

The protein localises to the cell outer membrane. Its function is as follows. Involved in the active translocation of vitamin B12 (cyanocobalamin) across the outer membrane to the periplasmic space. It derives its energy for transport by interacting with the trans-periplasmic membrane protein TonB. This Escherichia coli O6:K15:H31 (strain 536 / UPEC) protein is Vitamin B12 transporter BtuB.